The chain runs to 227 residues: Cytidylate kinase (227 aa).

Glycine 12–threonine 20 is an ATP binding site.

The protein belongs to the cytidylate kinase family. Type 1 subfamily.

It is found in the cytoplasm. The enzyme catalyses CMP + ATP = CDP + ADP. It catalyses the reaction dCMP + ATP = dCDP + ADP. The protein is Cytidylate kinase of Enterobacter sp. (strain 638).